A 285-amino-acid polypeptide reads, in one-letter code: NADPH-dependent 7-cyano-7-deazaguanine reductase (285 aa).

80–82 (VES) serves as a coordination point for substrate. NADPH is bound at residue 82–83 (SK). Cys191 (thioimide intermediate) is an active-site residue. Asp198 serves as the catalytic Proton donor. Residue 231 to 232 (HE) coordinates substrate. Position 260-261 (260-261 (RG)) interacts with NADPH.

The protein belongs to the GTP cyclohydrolase I family. QueF type 2 subfamily. As to quaternary structure, homodimer.

The protein localises to the cytoplasm. It carries out the reaction 7-aminomethyl-7-carbaguanine + 2 NADP(+) = 7-cyano-7-deazaguanine + 2 NADPH + 3 H(+). The protein operates within tRNA modification; tRNA-queuosine biosynthesis. Functionally, catalyzes the NADPH-dependent reduction of 7-cyano-7-deazaguanine (preQ0) to 7-aminomethyl-7-deazaguanine (preQ1). The polypeptide is NADPH-dependent 7-cyano-7-deazaguanine reductase (Psychrobacter cryohalolentis (strain ATCC BAA-1226 / DSM 17306 / VKM B-2378 / K5)).